The primary structure comprises 618 residues: UvrABC system protein C (618 aa).

In terms of domain architecture, GIY-YIG spans 19–97 (SEPGIYRMLD…IKALRPKYNV (79 aa)). The UVR domain occupies 208-243 (QIILDALAERMKQAVNQLNFEEAAVLRDQIKNLRLI).

This sequence belongs to the UvrC family. As to quaternary structure, interacts with UvrB in an incision complex.

The protein resides in the cytoplasm. Its function is as follows. The UvrABC repair system catalyzes the recognition and processing of DNA lesions. UvrC both incises the 5' and 3' sides of the lesion. The N-terminal half is responsible for the 3' incision and the C-terminal half is responsible for the 5' incision. This Legionella pneumophila (strain Paris) protein is UvrABC system protein C.